Here is a 1407-residue protein sequence, read N- to C-terminus: DNA-directed RNA polymerase subunit beta' (1407 aa).

Residues C70, C72, C85, and C88 each contribute to the Zn(2+) site. D460, D462, and D464 together coordinate Mg(2+). An N6-acetyllysine modification is found at K972.

Belongs to the RNA polymerase beta' chain family. In terms of assembly, the RNAP catalytic core consists of 2 alpha, 1 beta, 1 beta' and 1 omega subunit. When a sigma factor is associated with the core the holoenzyme is formed, which can initiate transcription. The cofactor is Mg(2+). It depends on Zn(2+) as a cofactor.

It catalyses the reaction RNA(n) + a ribonucleoside 5'-triphosphate = RNA(n+1) + diphosphate. In terms of biological role, DNA-dependent RNA polymerase catalyzes the transcription of DNA into RNA using the four ribonucleoside triphosphates as substrates. The sequence is that of DNA-directed RNA polymerase subunit beta' from Escherichia coli O6:K15:H31 (strain 536 / UPEC).